Reading from the N-terminus, the 309-residue chain is Ribosomal RNA small subunit methyltransferase H (309 aa).

S-adenosyl-L-methionine is bound by residues 30–32 (GGH), Asp50, Phe74, Asp96, and Gln103.

The protein belongs to the methyltransferase superfamily. RsmH family.

The protein localises to the cytoplasm. The enzyme catalyses cytidine(1402) in 16S rRNA + S-adenosyl-L-methionine = N(4)-methylcytidine(1402) in 16S rRNA + S-adenosyl-L-homocysteine + H(+). Functionally, specifically methylates the N4 position of cytidine in position 1402 (C1402) of 16S rRNA. The chain is Ribosomal RNA small subunit methyltransferase H from Wigglesworthia glossinidia brevipalpis.